The following is a 127-amino-acid chain: Large ribosomal subunit protein bL12 (127 aa).

The protein belongs to the bacterial ribosomal protein bL12 family. In terms of assembly, homodimer. Part of the ribosomal stalk of the 50S ribosomal subunit. Forms a multimeric L10(L12)X complex, where L10 forms an elongated spine to which 2 to 4 L12 dimers bind in a sequential fashion. Binds GTP-bound translation factors.

In terms of biological role, forms part of the ribosomal stalk which helps the ribosome interact with GTP-bound translation factors. Is thus essential for accurate translation. The protein is Large ribosomal subunit protein bL12 of Thiobacillus denitrificans (strain ATCC 25259 / T1).